Reading from the N-terminus, the 245-residue chain is Uridylate kinase (245 aa).

12-15 is a binding site for ATP; it reads KLSG. The involved in allosteric activation by GTP stretch occupies residues 20-25; sequence GEKGVG. Position 54 (G54) interacts with UMP. G55 and R59 together coordinate ATP. Residues D74 and 135–142 each bind UMP; that span reads IGSPYFST. Residues N163, Y169, and D172 each contribute to the ATP site.

The protein belongs to the UMP kinase family. In terms of assembly, homohexamer.

The protein localises to the cytoplasm. The enzyme catalyses UMP + ATP = UDP + ADP. The protein operates within pyrimidine metabolism; CTP biosynthesis via de novo pathway; UDP from UMP (UMPK route): step 1/1. Its activity is regulated as follows. Allosterically activated by GTP. Inhibited by UTP. In terms of biological role, catalyzes the reversible phosphorylation of UMP to UDP. The protein is Uridylate kinase of Streptococcus thermophilus (strain ATCC BAA-250 / LMG 18311).